The primary structure comprises 311 residues: Putative dihydroorotate dehydrogenase A (fumarate) (311 aa).

Residues lysine 45, 69 to 73 (NSMGL), and asparagine 128 each bind substrate. 45-46 (KT) contacts FMN. FMN is bound at residue asparagine 128. Residue cysteine 131 is the Nucleophile of the active site. Residues lysine 165 and valine 193 each coordinate FMN. Residue 194–195 (NS) participates in substrate binding. FMN is bound by residues glycine 220, 248–249 (GG), and 270–271 (GT).

It belongs to the dihydroorotate dehydrogenase family. Type 1 subfamily. As to quaternary structure, homodimer. The cofactor is FMN.

It is found in the cytoplasm. The enzyme catalyses (S)-dihydroorotate + fumarate = orotate + succinate. It functions in the pathway pyrimidine metabolism; UMP biosynthesis via de novo pathway. In terms of biological role, catalyzes the conversion of dihydroorotate to orotate with fumarate as the electron acceptor. This is Putative dihydroorotate dehydrogenase A (fumarate) (pyrD) from Streptococcus equi subsp. equi (strain 4047).